Consider the following 194-residue polypeptide: MRQATIKRETKETQIEISLNLDEQSGIEIDTGIGFLNHMLNLFAKHGRFGLVVKCHGDLDVDPHHTTEDTGIVLGECFKQALGDKQGIERYGTEFVPMDETLGQVSVDLSGRSYLVFDAELTNPRLGGLDTETVEDFFQAVAFAAEMNLHARILYGRNTHHKVESLFKAFGRAMRAAVTINPDIQGVNSTKGVI.

It belongs to the imidazoleglycerol-phosphate dehydratase family.

Its subcellular location is the cytoplasm. The catalysed reaction is D-erythro-1-(imidazol-4-yl)glycerol 3-phosphate = 3-(imidazol-4-yl)-2-oxopropyl phosphate + H2O. Its pathway is amino-acid biosynthesis; L-histidine biosynthesis; L-histidine from 5-phospho-alpha-D-ribose 1-diphosphate: step 6/9. In Lactiplantibacillus plantarum (strain ATCC BAA-793 / NCIMB 8826 / WCFS1) (Lactobacillus plantarum), this protein is Imidazoleglycerol-phosphate dehydratase.